The sequence spans 376 residues: Cysteine proteinase 2 (376 aa).

An N-terminal signal peptide occupies residues 1–18 (MRLLVFLILLIFVNFSFA). The propeptide at 19 to 122 (NVRPNGRRFS…EVLNVEDLQT (104 aa)) is activation peptide. Cystine bridges form between C144–C187, C178–C221, and C279–C365. Residue C147 is part of the active site. Residues H286 and N343 contribute to the active site.

It belongs to the peptidase C1 family.

The protein localises to the lysosome. Cysteine proteinases 1 and 2 are believed to participate in the breakdown of protein during differentiation of Dictyostelium as a response to starvation. The sequence is that of Cysteine proteinase 2 (cprB) from Dictyostelium discoideum (Social amoeba).